We begin with the raw amino-acid sequence, 132 residues long: Interleukin-13 (132 aa).

An N-terminal signal peptide occupies residues 1-18 (MALLLTTVIALTCLGGFA). 4 N-linked (GlcNAc...) asparagine glycosylation sites follow: Asn-38, Asn-49, Asn-57, and Asn-72. 2 disulfides stabilise this stretch: Cys-48–Cys-76 and Cys-64–Cys-90.

The protein belongs to the IL-4/IL-13 family. As to quaternary structure, interacts with IL13RA2.

It is found in the secreted. Functionally, cytokine that plays important roles in allergic inflammation and immune response to parasite infection. Synergizes with IL2 in regulating interferon-gamma synthesis. Stimulates B-cell proliferation, and activation of eosinophils, basophils, and mast cells. Plays an important role in controlling IL33 activity by modulating the production of transmembrane and soluble forms of interleukin-1 receptor-like 1/IL1RL1. Displays the capacity to antagonize Th1-driven proinflammatory immune response and downregulates synthesis of many proinflammatory cytokines including IL1, IL6, IL10, IL12 and TNF-alpha through a mechanism that partially involves suppression of NF-kappa-B. Also functions on nonhematopoietic cells, including endothelial cells where it induces vascular cell adhesion protein 1/VCAM1, which is important in the recruitment of eosinophils. Exerts its biological effects through its receptors which comprises the IL4R chain and the IL13RA1 chain, to activate JAK1 and TYK2, leading to the activation of STAT6. Aside from IL13RA1, another receptor IL13RA2 acts as a high affinity decoy for IL13 and mediates internalization and depletion of extracellular IL13. This Pan troglodytes (Chimpanzee) protein is Interleukin-13 (IL13).